Reading from the N-terminus, the 573-residue chain is Sulfate adenylyltransferase (573 aa).

The N-terminal stretch occupies residues 1-169 (MANPPHGGIL…VEAVNKLNHY (169 aa)). The interval 170–394 (DYVGLRFTPA…LRESNPPRSK (225 aa)) is catalytic. Q197 contacts sulfate. Residues 197–200 (QTRN) and 291–294 (GRDH) contribute to the ATP site. Residues T198, R199, and N200 contribute to the active site. Residue R199 participates in sulfate binding. A295 provides a ligand contact to sulfate. L333 contributes to the ATP binding site. The interval 395–573 (QGFTVFLTGY…LESQGFLEKA (179 aa)) is allosteric regulation domain; adenylyl-sulfate kinase-like. Residues 434-437 (DTVR), R451, 477-478 (IA), and R515 each bind 3'-phosphoadenylyl sulfate.

It in the N-terminal section; belongs to the sulfate adenylyltransferase family. This sequence in the C-terminal section; belongs to the APS kinase family. As to quaternary structure, homohexamer. Dimer of trimers.

It localises to the cytoplasm. The enzyme catalyses sulfate + ATP + H(+) = adenosine 5'-phosphosulfate + diphosphate. Its pathway is sulfur metabolism; hydrogen sulfide biosynthesis; sulfite from sulfate: step 1/3. Its activity is regulated as follows. Allosterically inhibited by 3'-phosphoadenosine 5'-phosphosulfate (PAPS). Functionally, catalyzes the first intracellular reaction of sulfate assimilation, forming adenosine-5'-phosphosulfate (APS) from inorganic sulfate and ATP. Plays an important role in sulfate activation as a component of the biosynthesis pathway of sulfur-containing amino acids. The chain is Sulfate adenylyltransferase from Coccidioides immitis (strain RS) (Valley fever fungus).